Here is a 66-residue protein sequence, read N- to C-terminus: Regulator of G-protein signaling 6 (66 aa).

Residues 1–66 (LAVQDLKKQP…EDAQEHIYKL (66 aa)) enclose the RGS domain.

As to quaternary structure, interacts with GNB5. Interacts with RGS7BP, leading to regulate the subcellular location of the heterodimer formed with GNB5. Interacts with GNAI1.

Its subcellular location is the cytoplasm. It localises to the cytosol. The protein localises to the membrane. It is found in the nucleus. The protein resides in the cell membrane. Its function is as follows. Regulates G protein-coupled receptor signaling cascades. Inhibits signal transduction by increasing the GTPase activity of G protein alpha subunits, thereby driving them into their inactive GDP-bound form. The RGS6/GNB5 dimer enhances GNAO1 GTPase activity. The polypeptide is Regulator of G-protein signaling 6 (Rgs6) (Rattus norvegicus (Rat)).